Reading from the N-terminus, the 323-residue chain is Cyclin-H (323 aa).

Residue serine 5 is modified to Phosphoserine; by CDK8. A Phosphoserine modification is found at serine 132. The tract at residues 297–323 is disordered; sequence YEDDDYVSKKSKHEEEEWTDDDLVESL. The span at 302-311 shows a compositional bias: basic and acidic residues; that stretch reads YVSKKSKHEE. At serine 304 the chain carries Phosphoserine; by CDK8. Over residues 312-323 the composition is skewed to acidic residues; it reads EEWTDDDLVESL. The residue at position 315 (threonine 315) is a Phosphothreonine. Phosphoserine is present on serine 322.

This sequence belongs to the cyclin family. Cyclin C subfamily. In terms of assembly, associates primarily with CDK7 and MAT1 to form the CAK complex. CAK can further associate with the core-TFIIH to form the TFIIH basal transcription factor.

Its subcellular location is the nucleus. Its function is as follows. Regulates CDK7, the catalytic subunit of the CDK-activating kinase (CAK) enzymatic complex. CAK activates the cyclin-associated kinases CDK1, CDK2, CDK4 and CDK6 by threonine phosphorylation. CAK complexed to the core-TFIIH basal transcription factor activates RNA polymerase II by serine phosphorylation of the repetitive C-terminal domain (CTD) of its large subunit (POLR2A), allowing its escape from the promoter and elongation of the transcripts. Involved in cell cycle control and in RNA transcription by RNA polymerase II. Its expression and activity are constant throughout the cell cycle. The sequence is that of Cyclin-H (CCNH) from Homo sapiens (Human).